The primary structure comprises 134 residues: DNA-binding protein inhibitor ID-2 (134 aa).

Positions 1-24 (MKAFSPVRSVRKNSLSDHGLGISR) are disordered. Residues serine 14 and serine 25 each carry the phosphoserine modification. Positions 23-75 (SRSKTPVDDPMSLLYNMNDCYSKLKELVPSIPQNKKVSKMEILQHVIDYILDL) constitute a bHLH domain. A Nuclear export signal motif is present at residues 106–115 (LNTDISILSL).

In terms of assembly, interacts with GATA4 and NKX2-5. Interacts with NR0B2. Interacts with CLOCK and BMAL1. Interacts with IFI204. Interacts with NEDD9/HEF1. Interacts with ASB4; this interaction promotes ID2 proteasomal degradation. Ubiquitinated in a ASB4-depedent manner, leading to proteasomal degradation. Post-translationally, phosphorylated in vitro by CDK1, PKA and PKC.

The protein resides in the cytoplasm. It is found in the nucleus. Functionally, transcriptional regulator (lacking a basic DNA binding domain) which negatively regulates the basic helix-loop-helix (bHLH) transcription factors by forming heterodimers and inhibiting their DNA binding and transcriptional activity. Implicated in regulating a variety of cellular processes, including cellular growth, senescence, differentiation, apoptosis, angiogenesis, and neoplastic transformation. Inhibits skeletal muscle and cardiac myocyte differentiation. Regulates the circadian clock by repressing the transcriptional activator activity of the CLOCK-BMAL1 heterodimer. Restricts the CLOCK and BMAL1 localization to the cytoplasm. Plays a role in both the input and output pathways of the circadian clock: in the input component, is involved in modulating the magnitude of photic entrainment and in the output component, contributes to the regulation of a variety of liver clock-controlled genes involved in lipid metabolism. The protein is DNA-binding protein inhibitor ID-2 (ID2) of Bos taurus (Bovine).